The following is a 291-amino-acid chain: Trimeric intracellular cation channel type B (291 aa).

Residues 1–16 (MEYPWDDLTLAFSRTS) lie on the Lumenal side of the membrane. Residues 17–33 (MFPFFDIAHYLVSVMAL) traverse the membrane as a helical segment. Residues 34–47 (KQRPGAVAAAWSNP) are Cytoplasmic-facing. The chain crosses the membrane as a helical span at residues 48-69 (LSSWLSAMLHCFGGGILSCILL). The Lumenal segment spans residues 70–80 (AEPPLKFLTNH). A helical membrane pass occupies residues 81–99 (TNILLASSIWYIVFFCPRD). At 100–103 (LVSQ) the chain is on the cytoplasmic side. The helical transmembrane segment at 104–122 (GYSYQPIQLLAAGMKEVTR) threads the bilayer. The a 1,2-diacyl-sn-glycero-3-phospho-(1D-myo-inositol-4,5-bisphosphate) site is built by lysine 118 and arginine 122. Topologically, residues 123 to 138 (TWKIVGGVAHANGYYR) are lumenal. The chain crosses the membrane as a helical span at residues 139-156 (NGWIVMIAVGWARGAGGA). At 157–179 (IITACEQLLKGDWKPEGDEWLKM) the chain is on the cytoplasmic side. A helical transmembrane segment spans residues 180–197 (SFPCKVTLLGSIMFTFQH). The Lumenal portion of the chain corresponds to 198-206 (TRHLAISKH). The helical transmembrane segment at 207–225 (DLMFLYTIFLVTIKVTMMM) threads the bilayer. The Cytoplasmic portion of the chain corresponds to 226–291 (TKDAAVTLTP…SAKRHAKKED (66 aa)). The interval 254-291 (LSEKKAEVKPSSNGSASSASKRGTEPPSSAKRHAKKED) is disordered. Positions 264–273 (SSNGSASSAS) are enriched in low complexity.

It belongs to the TMEM38 family. As to quaternary structure, homotrimer; conformation seems to be controled by binding to diacylglycerol (DAG).

The protein localises to the endoplasmic reticulum membrane. The enzyme catalyses K(+)(in) = K(+)(out). Channel activity is activated by increased cytosolic Ca(2+) levels and blocked by luminal high Ca(2+) levels. Its function is as follows. Intracellular monovalent cation channel required for maintenance of rapid intracellular calcium release. Acts as a potassium counter-ion channel that functions in synchronization with calcium release from intracellular stores. Activated by increased cytosolic Ca(2+) levels. This chain is Trimeric intracellular cation channel type B (Tmem38b), found in Rattus norvegicus (Rat).